The chain runs to 859 residues: DNA mismatch repair protein MutS (859 aa).

618–625 (GPNMGGKS) is a binding site for ATP. Residues 803 to 829 (RDHDVQQNTEQQGTQQNMSFVPSAPSP) are disordered. The segment covering 808–819 (QQNTEQQGTQQN) has biased composition (low complexity).

It belongs to the DNA mismatch repair MutS family.

Functionally, this protein is involved in the repair of mismatches in DNA. It is possible that it carries out the mismatch recognition step. This protein has a weak ATPase activity. The sequence is that of DNA mismatch repair protein MutS from Shewanella pealeana (strain ATCC 700345 / ANG-SQ1).